The following is an 82-amino-acid chain: Putative membrane protein insertion efficiency factor (82 aa).

Belongs to the UPF0161 family.

Its subcellular location is the cell inner membrane. Its function is as follows. Could be involved in insertion of integral membrane proteins into the membrane. The sequence is that of Putative membrane protein insertion efficiency factor from Francisella tularensis subsp. holarctica (strain LVS).